Consider the following 149-residue polypeptide: MKLTDYVKQVSLEDFGRPFIHHVQWNRRLRSTGGRFFPKDGHLDFNPKVYQKLGMEVFRKIVRHELCHYHLYFQGKGYQHKDRDFKELLKAVDGLRFVPSLPNSNSKPLKLYRCQSCQQRYQRKRRIDTKRYRCGLCRGKLLLINQPED.

The SprT-like domain maps to 4 to 143 (TDYVKQVSLE…CGLCRGKLLL (140 aa)). Residue H64 coordinates Zn(2+). E65 is an active-site residue. Residue H68 coordinates Zn(2+).

The protein belongs to the SprT family. Zn(2+) is required as a cofactor.

It is found in the cytoplasm. This Streptococcus pneumoniae (strain Taiwan19F-14) protein is Protein SprT-like.